Here is a 216-residue protein sequence, read N- to C-terminus: Ras-related protein RABA1a (216 aa).

20-27 (GDSGVGKS) is a GTP binding site. The short motif at 42–50 (SKSTIGVEF) is the Effector region element. GTP-binding positions include 68-72 (DTAGQ), 126-129 (NKCD), and 156-157 (SA). Residues cysteine 213 and cysteine 214 are each lipidated (S-geranylgeranyl cysteine).

Belongs to the small GTPase superfamily. Rab family.

It localises to the cell membrane. In terms of biological role, involved in auxin-mediated response. May be involved in vesicle trafficking of components involved in polar auxin transport. Binds GTP and GDP and possesses intrinsic GTPase activity. The polypeptide is Ras-related protein RABA1a (RABA1A) (Arabidopsis thaliana (Mouse-ear cress)).